A 337-amino-acid polypeptide reads, in one-letter code: Eukaryotic translation initiation factor 3 subunit I (337 aa).

5 WD repeats span residues Gly8 to Thr47, Gly50 to Asp91, Cys147 to Asn186, Glu191 to Thr230, and Gly288 to Met327.

The protein belongs to the eIF-3 subunit I family. In terms of assembly, component of the eukaryotic translation initiation factor 3 (eIF-3) complex.

It localises to the cytoplasm. In terms of biological role, component of the eukaryotic translation initiation factor 3 (eIF-3) complex, which is involved in protein synthesis of a specialized repertoire of mRNAs and, together with other initiation factors, stimulates binding of mRNA and methionyl-tRNAi to the 40S ribosome. The eIF-3 complex specifically targets and initiates translation of a subset of mRNAs involved in cell proliferation. This is Eukaryotic translation initiation factor 3 subunit I (tif34) from Aspergillus niger (strain ATCC MYA-4892 / CBS 513.88 / FGSC A1513).